The following is a 560-amino-acid chain: 2-succinyl-5-enolpyruvyl-6-hydroxy-3-cyclohexene-1-carboxylate synthase (560 aa).

This sequence belongs to the TPP enzyme family. MenD subfamily. In terms of assembly, homodimer. Mg(2+) is required as a cofactor. The cofactor is Mn(2+). Requires thiamine diphosphate as cofactor.

The catalysed reaction is isochorismate + 2-oxoglutarate + H(+) = 5-enolpyruvoyl-6-hydroxy-2-succinyl-cyclohex-3-ene-1-carboxylate + CO2. It functions in the pathway quinol/quinone metabolism; 1,4-dihydroxy-2-naphthoate biosynthesis; 1,4-dihydroxy-2-naphthoate from chorismate: step 2/7. It participates in quinol/quinone metabolism; menaquinone biosynthesis. Its function is as follows. Catalyzes the thiamine diphosphate-dependent decarboxylation of 2-oxoglutarate and the subsequent addition of the resulting succinic semialdehyde-thiamine pyrophosphate anion to isochorismate to yield 2-succinyl-5-enolpyruvyl-6-hydroxy-3-cyclohexene-1-carboxylate (SEPHCHC). This chain is 2-succinyl-5-enolpyruvyl-6-hydroxy-3-cyclohexene-1-carboxylate synthase, found in Pectobacterium atrosepticum (strain SCRI 1043 / ATCC BAA-672) (Erwinia carotovora subsp. atroseptica).